Reading from the N-terminus, the 293-residue chain is ATP synthase gamma chain (293 aa).

The protein belongs to the ATPase gamma chain family. F-type ATPases have 2 components, CF(1) - the catalytic core - and CF(0) - the membrane proton channel. CF(1) has five subunits: alpha(3), beta(3), gamma(1), delta(1), epsilon(1). CF(0) has three main subunits: a, b and c.

It is found in the cell inner membrane. In terms of biological role, produces ATP from ADP in the presence of a proton gradient across the membrane. The gamma chain is believed to be important in regulating ATPase activity and the flow of protons through the CF(0) complex. This chain is ATP synthase gamma chain, found in Leptothrix cholodnii (strain ATCC 51168 / LMG 8142 / SP-6) (Leptothrix discophora (strain SP-6)).